Consider the following 20-residue polypeptide: Chrysophsin-3 (20 aa).

At His-20 the chain carries Histidine amide.

As to expression, gill.

The protein resides in the secreted. Functionally, has antibacterial activity against Gram-positive bacteria B.subtilis ATCC 6633, L.garvieae ATCC 49156 and S.iniae F-8502, and Gram-negative bacteria E.coli WT-2, V.anguillarum ATCC 19264, V.penaeicida KHA, V.harveyi ATCC 14126, V.vulnificus ATCC 33148, A.salmonicida NCMB 1102 and P.putida ATCC 12633. Has hemolytic activity against human red blood cells. Seems to disrupt the membranes by adopting an alpha helical conformation. May play a significant role in innate host defense. The chain is Chrysophsin-3 from Pagrus major (Red sea bream).